The primary structure comprises 151 residues: Prefoldin subunit alpha (151 aa).

The protein belongs to the prefoldin subunit alpha family. Heterohexamer of two alpha and four beta subunits.

The protein localises to the cytoplasm. In terms of biological role, molecular chaperone capable of stabilizing a range of proteins. Seems to fulfill an ATP-independent, HSP70-like function in archaeal de novo protein folding. The polypeptide is Prefoldin subunit alpha (pfdA) (Aeropyrum pernix (strain ATCC 700893 / DSM 11879 / JCM 9820 / NBRC 100138 / K1)).